We begin with the raw amino-acid sequence, 279 residues long: Troponin T, fast skeletal muscle (279 aa).

The segment covering 1 to 21 (MSDEEVEHVEEQYEEEEEAQE) has biased composition (acidic residues). A disordered region spans residues 1–82 (MSDEEVEHVE…EKVDFDDIQK (82 aa)). Position 2 is an N-acetylserine (serine 2). Serine 2 bears the Phosphoserine mark. Composition is skewed to basic and acidic residues over residues 28–49 (EVHEPAPEVHVPEEVHEDALED) and 70–82 (PEGEKVDFDDIQK). Serine 98 carries the post-translational modification Phosphoserine. Residues 121–163 (RAERAEQQRIRAEKERERQNRLAEEKARREEEDAKRRAEEDLK) show a composition bias toward basic and acidic residues. A disordered region spans residues 121–200 (RAERAEQQRI…TAREMKKKIL (80 aa)). Phosphoserine is present on residues serine 169, serine 176, and serine 177. Positions 191-200 (TAREMKKKIL) are enriched in basic and acidic residues. Serine 213 is subject to Phosphoserine. Tyrosine 229 carries the post-translational modification Phosphotyrosine.

The protein belongs to the troponin T family.

In terms of biological role, troponin T is the tropomyosin-binding subunit of troponin, the thin filament regulatory complex which confers calcium-sensitivity to striated muscle actomyosin ATPase activity. The polypeptide is Troponin T, fast skeletal muscle (TNNT3) (Oryctolagus cuniculus (Rabbit)).